Consider the following 473-residue polypeptide: Glutamate--tRNA ligase (473 aa).

A 'HIGH' region motif is present at residues 11–21 (PSPTGFLHIGG). A 'KMSKS' region motif is present at residues 240–244 (KLSKR). Lysine 243 contacts ATP.

It belongs to the class-I aminoacyl-tRNA synthetase family. Glutamate--tRNA ligase type 1 subfamily. As to quaternary structure, monomer.

It localises to the cytoplasm. It carries out the reaction tRNA(Glu) + L-glutamate + ATP = L-glutamyl-tRNA(Glu) + AMP + diphosphate. In terms of biological role, catalyzes the attachment of glutamate to tRNA(Glu) in a two-step reaction: glutamate is first activated by ATP to form Glu-AMP and then transferred to the acceptor end of tRNA(Glu). The protein is Glutamate--tRNA ligase of Rhodopseudomonas palustris (strain ATCC BAA-98 / CGA009).